A 196-amino-acid polypeptide reads, in one-letter code: Imidazoleglycerol-phosphate dehydratase (196 aa).

It belongs to the imidazoleglycerol-phosphate dehydratase family.

The protein localises to the cytoplasm. It carries out the reaction D-erythro-1-(imidazol-4-yl)glycerol 3-phosphate = 3-(imidazol-4-yl)-2-oxopropyl phosphate + H2O. Its pathway is amino-acid biosynthesis; L-histidine biosynthesis; L-histidine from 5-phospho-alpha-D-ribose 1-diphosphate: step 6/9. This Dehalococcoides mccartyi (strain ATCC BAA-2266 / KCTC 15142 / 195) (Dehalococcoides ethenogenes (strain 195)) protein is Imidazoleglycerol-phosphate dehydratase.